A 256-amino-acid chain; its full sequence is Hydroxyethylthiazole kinase (256 aa).

Residue methionine 38 coordinates substrate. 2 residues coordinate ATP: arginine 114 and threonine 159. Glycine 186 serves as a coordination point for substrate.

The protein belongs to the Thz kinase family. It depends on Mg(2+) as a cofactor.

It carries out the reaction 5-(2-hydroxyethyl)-4-methylthiazole + ATP = 4-methyl-5-(2-phosphooxyethyl)-thiazole + ADP + H(+). It functions in the pathway cofactor biosynthesis; thiamine diphosphate biosynthesis; 4-methyl-5-(2-phosphoethyl)-thiazole from 5-(2-hydroxyethyl)-4-methylthiazole: step 1/1. In terms of biological role, catalyzes the phosphorylation of the hydroxyl group of 4-methyl-5-beta-hydroxyethylthiazole (THZ). This is Hydroxyethylthiazole kinase from Streptococcus agalactiae serotype Ia (strain ATCC 27591 / A909 / CDC SS700).